The following is a 159-amino-acid chain: Ribosomal RNA large subunit methyltransferase H (159 aa).

S-adenosyl-L-methionine contacts are provided by residues Leu76, Gly108, and 127 to 132; that span reads FSRMTF.

The protein belongs to the RNA methyltransferase RlmH family. As to quaternary structure, homodimer.

The protein localises to the cytoplasm. It catalyses the reaction pseudouridine(1915) in 23S rRNA + S-adenosyl-L-methionine = N(3)-methylpseudouridine(1915) in 23S rRNA + S-adenosyl-L-homocysteine + H(+). Its function is as follows. Specifically methylates the pseudouridine at position 1915 (m3Psi1915) in 23S rRNA. The protein is Ribosomal RNA large subunit methyltransferase H of Bacillus licheniformis (strain ATCC 14580 / DSM 13 / JCM 2505 / CCUG 7422 / NBRC 12200 / NCIMB 9375 / NCTC 10341 / NRRL NRS-1264 / Gibson 46).